The following is a 258-amino-acid chain: Meiotic drive suppressor wtf20 (258 aa).

Residues 1–71 (MKNNYTSLKS…GPTEIANPNV (71 aa)) are disordered. Residues 19 to 30 (KTDHEIDLEKGL) show a composition bias toward basic and acidic residues. 3 helical membrane passes run 84 to 106 (IYFL…TAWV), 121 to 140 (FSVT…FYFY), and 196 to 216 (SASA…AETV).

This sequence belongs to the WTF family. Homomer. Interacts with other proteins that exhibit high sequence similarity.

Its subcellular location is the spore membrane. It is found in the vacuole membrane. Its function is as follows. Acts as a suppressor component of the dual wtf meiotic drive system, and can suppress but not confer meiotic drive by compatible poisons. Wtf meiotic drive systems promote unequal transmission of alleles from the parental zygote to progeny spores by encoding a poison and an antidote from the same locus; the poison is trans-acting and forms toxic aggregates in all spores within an ascus, wherease the antidote is spore-specific and targets aggregates for degradation by the vacuole. Meiotic drive by wtf systems therefore lead to poisoning of all progeny that do not inherit the dual poison/antidote allele, or express a compatible antidote. This is Meiotic drive suppressor wtf20 from Schizosaccharomyces pombe (strain 972 / ATCC 24843) (Fission yeast).